Consider the following 744-residue polypeptide: NADH-ubiquinone oxidoreductase 78 kDa subunit, mitochondrial (744 aa).

Residues 1–10 (MLRSTLSRSA) show a composition bias toward polar residues. The disordered stretch occupies residues 1–26 (MLRSTLSRSAWRTGRHQAARNASRAF). Residues 1–33 (MLRSTLSRSAWRTGRHQAARNASRAFSATAQRP) constitute a mitochondrion transit peptide. The 2Fe-2S ferredoxin-type domain maps to 34–112 (AEVELTIDGK…GMVVKTNSPL (79 aa)). Residues Cys-68, Cys-79, Cys-82, and Cys-96 each coordinate [2Fe-2S] cluster. Positions 112 to 151 (LTHKAREGVMEFLLANHPLDCPICDQGGECDLQDQSMRYG) constitute a 4Fe-4S His(Cys)3-ligated-type domain. 8 residues coordinate [4Fe-4S] cluster: His-128, Cys-132, Cys-135, Cys-141, Cys-182, Cys-185, Cys-188, and Cys-232. In terms of domain architecture, 4Fe-4S Mo/W bis-MGD-type spans 251 to 307 (LKKTESIDVLDGLGSNIRVDTRGLEVMRILPRLNDEVNEEWINDKTRFACDGLKTQR).

The protein belongs to the complex I 75 kDa subunit family. In terms of assembly, complex I is composed of about 40 different subunits. [2Fe-2S] cluster is required as a cofactor. Requires [4Fe-4S] cluster as cofactor.

It localises to the mitochondrion inner membrane. The catalysed reaction is a ubiquinone + NADH + 5 H(+)(in) = a ubiquinol + NAD(+) + 4 H(+)(out). Core subunit of the mitochondrial membrane respiratory chain NADH dehydrogenase (Complex I) that is believed to belong to the minimal assembly required for catalysis. Complex I functions in the transfer of electrons from NADH to the respiratory chain. The immediate electron acceptor for the enzyme is believed to be ubiquinone. This is the largest subunit of complex I and it is a component of the iron-sulfur (IP) fragment of the enzyme. It may form part of the active site crevice where NADH is oxidized. The chain is NADH-ubiquinone oxidoreductase 78 kDa subunit, mitochondrial (nuo78) from Neurospora crassa (strain ATCC 24698 / 74-OR23-1A / CBS 708.71 / DSM 1257 / FGSC 987).